Consider the following 195-residue polypeptide: Nucleoside triphosphate pyrophosphatase (195 aa).

Asp70 acts as the Proton acceptor in catalysis.

Belongs to the Maf family. Requires a divalent metal cation as cofactor.

It localises to the cytoplasm. The catalysed reaction is a ribonucleoside 5'-triphosphate + H2O = a ribonucleoside 5'-phosphate + diphosphate + H(+). The enzyme catalyses a 2'-deoxyribonucleoside 5'-triphosphate + H2O = a 2'-deoxyribonucleoside 5'-phosphate + diphosphate + H(+). Its function is as follows. Nucleoside triphosphate pyrophosphatase. May have a dual role in cell division arrest and in preventing the incorporation of modified nucleotides into cellular nucleic acids. In Microcystis aeruginosa (strain NIES-843 / IAM M-2473), this protein is Nucleoside triphosphate pyrophosphatase.